The primary structure comprises 234 residues: Sugar fermentation stimulation protein A (234 aa).

A DNA-binding region (H-T-H motif) is located at residues Leu201–Ser220.

Belongs to the SfsA family.

Functionally, binds to DNA non-specifically. Could be a regulatory factor involved in maltose metabolism. This Salmonella arizonae (strain ATCC BAA-731 / CDC346-86 / RSK2980) protein is Sugar fermentation stimulation protein A.